The primary structure comprises 526 residues: Aspartate ammonia-lyase (526 aa).

The interval 1–44 is disordered; the sequence is MSKTSNKSSADSKNDAKAEDIVNGENQIATNESQSSDSAAVSER. Basic and acidic residues predominate over residues 10-20; sequence ADSKNDAKAED. Over residues 24 to 39 the composition is skewed to polar residues; it reads GENQIATNESQSSDSA. 5 residues coordinate L-aspartate: threonine 155, serine 194, threonine 195, asparagine 196, and threonine 241. Residues 371 to 380 form an SS loop region; the sequence is GSSIMPAKVN. Residue serine 372 is the Proton acceptor of the active site. Residues serine 373 and lysine 378 each coordinate L-aspartate.

It belongs to the class-II fumarase/aspartase family. Aspartase subfamily. Homotetramer.

The enzyme catalyses L-aspartate = fumarate + NH4(+). Functionally, catalyzes the reversible conversion of L-aspartate to fumarate and ammonia. The polypeptide is Aspartate ammonia-lyase (Corynebacterium glutamicum (strain ATCC 13032 / DSM 20300 / JCM 1318 / BCRC 11384 / CCUG 27702 / LMG 3730 / NBRC 12168 / NCIMB 10025 / NRRL B-2784 / 534)).